Here is a 596-residue protein sequence, read N- to C-terminus: Arginine--tRNA ligase (596 aa).

A 'HIGH' region motif is present at residues 135 to 145 (ANPTGPIHIGG). The segment at 227 to 249 (PRVDGGADQDGNPLGEGDSEQRE) is disordered.

The protein belongs to the class-I aminoacyl-tRNA synthetase family. As to quaternary structure, monomer.

It is found in the cytoplasm. It carries out the reaction tRNA(Arg) + L-arginine + ATP = L-arginyl-tRNA(Arg) + AMP + diphosphate. This is Arginine--tRNA ligase from Bifidobacterium adolescentis (strain ATCC 15703 / DSM 20083 / NCTC 11814 / E194a).